The following is a 471-amino-acid chain: MAMAGCNGFFLHQLRQPRLQLARQLGRTPSRAYSAPSNGSIPAAKKKYVPTKGTYPLGFRTSGTIVGVKPSNTTKPDLALLTSDAPCVAAAVFTKNKFQAAPVTFSRNLLERRKNQGIQSVIINSGCANAVTGKGGLEDATKMAQEADKCTGQNESTIVMSTGVIGQRLPIDKILNKVPSAHGALGGSHDHWLAAAKAICTTDTFPKLMSRTFALPSSPGVEYRIAGMTKGAGMIHPNMATLLGVIATDAPITSAALPSALKHAVDRSFNSITIDGDTSTNDTVALFANGAAGGKEVAEGTPDYDAFRAVLTDFAAELAQLVVRDGEGATKFVTVRVTESASEEAARRIASTIARSPLVKTALYGKDANWGRILCATGYSLISEPGQPINDVPEIAPEKTNVSFIPTDGTAELKLLVNGEPEKVDEARAAEILELEDLEILVRLGQGDKQATYWTCDYSHEYITINGDYRT.

Residues 1–33 constitute a mitochondrion transit peptide; that stretch reads MAMAGCNGFFLHQLRQPRLQLARQLGRTPSRAY. 6 residues coordinate substrate: Thr201, Lys230, Thr241, Glu327, Asn466, and Thr471. The active-site Nucleophile is the Thr241.

This sequence belongs to the ArgJ family. Heterodimer of an alpha and a beta chain. The alpha and beta chains are autoproteolytically processed from a single precursor protein within the mitochondrion.

The protein localises to the mitochondrion matrix. The catalysed reaction is N(2)-acetyl-L-ornithine + L-glutamate = N-acetyl-L-glutamate + L-ornithine. The enzyme catalyses L-glutamate + acetyl-CoA = N-acetyl-L-glutamate + CoA + H(+). Its pathway is amino-acid biosynthesis; L-arginine biosynthesis; L-ornithine and N-acetyl-L-glutamate from L-glutamate and N(2)-acetyl-L-ornithine (cyclic): step 1/1. It participates in amino-acid biosynthesis; L-arginine biosynthesis; N(2)-acetyl-L-ornithine from L-glutamate: step 1/4. Functionally, catalyzes two activities which are involved in the cyclic version of arginine biosynthesis: the synthesis of acetylglutamate from glutamate and acetyl-CoA, and of ornithine by transacetylation between acetylornithine and glutamate. This is Arginine biosynthesis bifunctional protein ArgJ, mitochondrial from Chaetomium globosum (strain ATCC 6205 / CBS 148.51 / DSM 1962 / NBRC 6347 / NRRL 1970) (Soil fungus).